A 96-amino-acid polypeptide reads, in one-letter code: Co-chaperonin GroES 1 (96 aa).

The protein belongs to the GroES chaperonin family. As to quaternary structure, heptamer of 7 subunits arranged in a ring. Interacts with the chaperonin GroEL.

It localises to the cytoplasm. Its function is as follows. Together with the chaperonin GroEL, plays an essential role in assisting protein folding. The GroEL-GroES system forms a nano-cage that allows encapsulation of the non-native substrate proteins and provides a physical environment optimized to promote and accelerate protein folding. GroES binds to the apical surface of the GroEL ring, thereby capping the opening of the GroEL channel. This is Co-chaperonin GroES 1 from Vibrio cholerae serotype O1 (strain ATCC 39315 / El Tor Inaba N16961).